Here is a 587-residue protein sequence, read N- to C-terminus: MASTNALSSTSILRSPTNQAQTSLSKKVKQHGRVNFRQKPNRFVVKAAAKDIAFDQHSRSAMQAGIDKLADAVGLTLGPRGRNVVLDEFGSPKVVNDGVTIARAIELPDPMENAGAALIREVASKTNDSAGDGTTTASILAREIIKLGLLNVTSGANPVSIKKGIDKTVAALVEELEKLARPVKGGDDIKAVATISAGNDELIGKMIAEAIDKVGPDGVLSIESSNSFETTVEVEEGMEIDRGYISPQFVTNPEKSIVEFENARVLITDQKISAIKDIIPLLEKTTQLRAPLLIISEDITGEALATLVVNKLRGILNVAAIKAPGFGERRKALLQDIAILTGAEFQASDLGLLVENTTIEQLGLARKVTISKDSTTIIADAASKDELQSRVAQLKKELSETDSIYDSEKLAERIAKLSGGVAVIKVGAATETELEDRKLRIEDAKNATFAAIEEGIVPGGGTALVHLSGYVPAIKEKLEDADERLGADIVQKALVAPAALIAQNAGIEGEVVVEKIKNGEWEVGYNAMTDTYENLVESGVIDPAKVTRCALQNAASVAGMVLTTQAIVVEKPKPKAAVAAAPQGLTI.

The span at 1–25 (MASTNALSSTSILRSPTNQAQTSLS) shows a compositional bias: polar residues. The tract at residues 1-33 (MASTNALSSTSILRSPTNQAQTSLSKKVKQHGR) is disordered. A chloroplast-targeting transit peptide spans 1-47 (MASTNALSSTSILRSPTNQAQTSLSKKVKQHGRVNFRQKPNRFVVKA).

The protein belongs to the chaperonin (HSP60) family. As to quaternary structure, oligomer of probably six alpha and six beta subunits.

The protein resides in the plastid. It is found in the chloroplast. Functionally, this protein binds RuBisCO small and large subunits and is implicated in the assembly of the enzyme oligomer. In Pisum sativum (Garden pea), this protein is RuBisCO large subunit-binding protein subunit alpha, chloroplastic.